Here is a 469-residue protein sequence, read N- to C-terminus: Adenosylhomocysteinase (469 aa).

Substrate contacts are provided by Thr60, Asp135, and Glu195. 196-198 (TTT) contacts NAD(+). Substrate is bound by residues Lys225 and Asp229. Residues Asn230, 259 to 264 (GYGDVG), Glu282, Asn317, 338 to 340 (IGH), and Asn383 each bind NAD(+).

Belongs to the adenosylhomocysteinase family. NAD(+) serves as cofactor.

The protein localises to the cytoplasm. It carries out the reaction S-adenosyl-L-homocysteine + H2O = L-homocysteine + adenosine. It functions in the pathway amino-acid biosynthesis; L-homocysteine biosynthesis; L-homocysteine from S-adenosyl-L-homocysteine: step 1/1. May play a key role in the regulation of the intracellular concentration of adenosylhomocysteine. This Hyphomonas neptunium (strain ATCC 15444) protein is Adenosylhomocysteinase.